The chain runs to 181 residues: Adenine phosphoribosyltransferase (181 aa).

The protein belongs to the purine/pyrimidine phosphoribosyltransferase family. As to quaternary structure, homodimer.

Its subcellular location is the cytoplasm. The catalysed reaction is AMP + diphosphate = 5-phospho-alpha-D-ribose 1-diphosphate + adenine. The protein operates within purine metabolism; AMP biosynthesis via salvage pathway; AMP from adenine: step 1/1. Catalyzes a salvage reaction resulting in the formation of AMP, that is energically less costly than de novo synthesis. This is Adenine phosphoribosyltransferase from Vibrio vulnificus (strain CMCP6).